Reading from the N-terminus, the 43-residue chain is Cytochrome b559 subunit beta (43 aa).

Residues W18–A34 traverse the membrane as a helical segment. H22 is a binding site for heme.

This sequence belongs to the PsbE/PsbF family. As to quaternary structure, heterodimer of an alpha subunit and a beta subunit. PSII is composed of 1 copy each of membrane proteins PsbA, PsbB, PsbC, PsbD, PsbE, PsbF, PsbH, PsbI, PsbJ, PsbK, PsbL, PsbM, PsbT, PsbX, PsbY, PsbZ, Psb30/Ycf12, peripheral proteins PsbO, CyanoQ (PsbQ), PsbU, PsbV and a large number of cofactors. It forms dimeric complexes. The cofactor is heme b.

The protein localises to the cellular thylakoid membrane. Its function is as follows. This b-type cytochrome is tightly associated with the reaction center of photosystem II (PSII). PSII is a light-driven water:plastoquinone oxidoreductase that uses light energy to abstract electrons from H(2)O, generating O(2) and a proton gradient subsequently used for ATP formation. It consists of a core antenna complex that captures photons, and an electron transfer chain that converts photonic excitation into a charge separation. The sequence is that of Cytochrome b559 subunit beta from Synechococcus sp. (strain JA-2-3B'a(2-13)) (Cyanobacteria bacterium Yellowstone B-Prime).